A 214-amino-acid chain; its full sequence is Cytochrome c biogenesis ATP-binding export protein CcmA (214 aa).

Positions 4–214 (LAVDQLTVSR…FDHGFDGAFL (211 aa)) constitute an ABC transporter domain. Residue 36 to 43 (GPNGIGKT) coordinates ATP.

The protein belongs to the ABC transporter superfamily. CcmA exporter (TC 3.A.1.107) family. In terms of assembly, the complex is composed of two ATP-binding proteins (CcmA) and two transmembrane proteins (CcmB).

The protein resides in the cell inner membrane. The enzyme catalyses heme b(in) + ATP + H2O = heme b(out) + ADP + phosphate + H(+). In terms of biological role, part of the ABC transporter complex CcmAB involved in the biogenesis of c-type cytochromes; once thought to export heme, this seems not to be the case, but its exact role is uncertain. Responsible for energy coupling to the transport system. This is Cytochrome c biogenesis ATP-binding export protein CcmA from Rhodobacter capsulatus (strain ATCC BAA-309 / NBRC 16581 / SB1003).